The following is a 449-amino-acid chain: Xylose isomerase (449 aa).

Catalysis depends on residues His-101 and Asp-104. Glu-232, Glu-268, His-271, Asp-296, Asp-307, Asp-309, and Asp-340 together coordinate Mg(2+).

The protein belongs to the xylose isomerase family. Homotetramer. The cofactor is Mg(2+).

Its subcellular location is the cytoplasm. It carries out the reaction alpha-D-xylose = alpha-D-xylulofuranose. In Bifidobacterium longum (strain DJO10A), this protein is Xylose isomerase.